A 491-amino-acid polypeptide reads, in one-letter code: UDP-N-acetylmuramate--L-alanine ligase (491 aa).

126-132 contributes to the ATP binding site; it reads GTHGKTT.

Belongs to the MurCDEF family.

It localises to the cytoplasm. It carries out the reaction UDP-N-acetyl-alpha-D-muramate + L-alanine + ATP = UDP-N-acetyl-alpha-D-muramoyl-L-alanine + ADP + phosphate + H(+). It participates in cell wall biogenesis; peptidoglycan biosynthesis. Functionally, cell wall formation. The polypeptide is UDP-N-acetylmuramate--L-alanine ligase (Shigella flexneri).